Consider the following 75-residue polypeptide: ATP synthase subunit c (75 aa).

Transmembrane regions (helical) follow at residues 8-28 and 54-74; these read FIAI…VANI and AGMV…LMFV.

Belongs to the ATPase C chain family. F-type ATPases have 2 components, F(1) - the catalytic core - and F(0) - the membrane proton channel. F(1) has five subunits: alpha(3), beta(3), gamma(1), delta(1), epsilon(1). F(0) has three main subunits: a(1), b(2) and c(10-14). The alpha and beta chains form an alternating ring which encloses part of the gamma chain. F(1) is attached to F(0) by a central stalk formed by the gamma and epsilon chains, while a peripheral stalk is formed by the delta and b chains.

It localises to the cell membrane. F(1)F(0) ATP synthase produces ATP from ADP in the presence of a proton or sodium gradient. F-type ATPases consist of two structural domains, F(1) containing the extramembraneous catalytic core and F(0) containing the membrane proton channel, linked together by a central stalk and a peripheral stalk. During catalysis, ATP synthesis in the catalytic domain of F(1) is coupled via a rotary mechanism of the central stalk subunits to proton translocation. Functionally, key component of the F(0) channel; it plays a direct role in translocation across the membrane. A homomeric c-ring of between 10-14 subunits forms the central stalk rotor element with the F(1) delta and epsilon subunits. The polypeptide is ATP synthase subunit c (Wolbachia sp. subsp. Brugia malayi (strain TRS)).